The sequence spans 113 residues: uncharacterized protein (113 aa).

Residues 7-29 traverse the membrane as a helical segment; sequence FFILIVLLFTVFSLKEFIPNTFC.

It is found in the membrane. This is an uncharacterized protein from Aquifex aeolicus (strain VF5).